Reading from the N-terminus, the 73-residue chain is Omega-conotoxin CVID (73 aa).

Residues 1–22 (MKLTCVVIVAVLLLTACQLITA) form the signal peptide. Residues 23–45 (DDSRGTQKHRALRSDTKLSMSTR) constitute a propeptide that is removed on maturation. Cystine bridges form between Cys46–Cys61, Cys53–Cys65, and Cys60–Cys72. Cys72 is subject to Cysteine amide.

This sequence belongs to the conotoxin O1 superfamily. As to expression, expressed by the venom duct.

It localises to the secreted. Its function is as follows. Omega-conotoxins act at presynaptic membranes, they bind and block voltage-gated calcium channels. This toxin inhibits neurotransmitter release, it blocks N-type calcium channels, probably a N-type (Cav2.2/CACNA1B) calcium channel variant. The protein is Omega-conotoxin CVID of Conus catus (Cat cone).